The chain runs to 514 residues: Alanine--glyoxylate aminotransferase 2, mitochondrial (514 aa).

The transit peptide at 1–41 (MTLIWRHLLRPLCLVTSAPRILEMHPFLSLGTSRTSVTKLS) directs the protein to the mitochondrion. An N6-acetyllysine; alternate modification is found at K71. N6-succinyllysine; alternate is present on K71. An N6-acetyllysine modification is found at K84. K262 is modified (N6-acetyllysine; alternate). The residue at position 262 (K262) is an N6-succinyllysine; alternate. K304 carries the post-translational modification N6-succinyllysine. Residue K350 is modified to N6-(pyridoxal phosphate)lysine. Residues K417 and K420 each carry the N6-acetyllysine; alternate modification. K417 and K420 each carry N6-succinyllysine; alternate.

This sequence belongs to the class-III pyridoxal-phosphate-dependent aminotransferase family. In terms of assembly, homotetramer. It depends on pyridoxal 5'-phosphate as a cofactor. In terms of tissue distribution, expressed in the convoluted tubule in the kidney and in the liver hepatocytes (at protein level).

Its subcellular location is the mitochondrion. The enzyme catalyses glyoxylate + L-alanine = glycine + pyruvate. It carries out the reaction (R)-3-amino-2-methylpropanoate + pyruvate = 2-methyl-3-oxopropanoate + L-alanine. It catalyses the reaction 3-oxopropanoate + L-alanine = beta-alanine + pyruvate. The catalysed reaction is 2-oxobutanoate + L-alanine = (2S)-2-aminobutanoate + pyruvate. The enzyme catalyses N(omega),N(omega)-dimethyl-L-arginine + pyruvate = 5-(3,3-dimethylguanidino)-2-oxopentanoate + L-alanine. It carries out the reaction N(omega),N('omega)-dimethyl-L-arginine + pyruvate = 5-(3,3'-dimethylguanidino)-2-oxopentanoate + L-alanine. It catalyses the reaction N(omega),N(omega)-dimethyl-L-arginine + glyoxylate = 5-(3,3-dimethylguanidino)-2-oxopentanoate + glycine. The catalysed reaction is N(omega),N('omega)-dimethyl-L-arginine + glyoxylate = 5-(3,3'-dimethylguanidino)-2-oxopentanoate + glycine. The enzyme catalyses N(omega)-methyl-L-arginine + pyruvate = 5-(3-methylguanidino)-2-oxopentanoate + L-alanine. It carries out the reaction N(omega)-methyl-L-arginine + glyoxylate = 5-(3-methylguanidino)-2-oxopentanoate + glycine. It catalyses the reaction L-ornithine + pyruvate = 5-amino-2-oxopentanoate + L-alanine. The catalysed reaction is L-ornithine + glyoxylate = 5-amino-2-oxopentanoate + glycine. The enzyme catalyses (2S)-2-aminobutanoate + glyoxylate = 2-oxobutanoate + glycine. It carries out the reaction N(omega),N(omega)-dimethyl-L-arginine + oxaloacetate = 5-(3,3-dimethylguanidino)-2-oxopentanoate + L-aspartate. It catalyses the reaction oxaloacetate + L-alanine = L-aspartate + pyruvate. The catalysed reaction is N(omega),N(omega)-dimethyl-L-arginine + 2-oxobutanoate = 5-(3,3-dimethylguanidino)-2-oxopentanoate + (2S)-2-aminobutanoate. The enzyme catalyses 2-oxopentanoate + N(omega),N(omega)-dimethyl-L-arginine = 5-(3,3-dimethylguanidino)-2-oxopentanoate + L-2-aminopentanoate. It carries out the reaction 2-oxohexanoate + N(omega),N(omega)-dimethyl-L-arginine = L-2-aminohexanoate + 5-(3,3-dimethylguanidino)-2-oxopentanoate. Its function is as follows. Multifunctional aminotransferase with a broad substrate specificity. Catalyzes the conversion of glyoxylate to glycine using alanine as the amino donor. Catalyzes metabolism of not L- but the D-isomer of D-beta-aminoisobutyric acid to generate 2-methyl-3-oxopropanoate and alanine. Catalyzes the transfer of the amino group from beta-alanine to pyruvate to yield L-alanine and 3-oxopropanoate. Can metabolize NG-monomethyl-L-arginine (NMMA), asymmetric NG,NG-dimethyl-L-arginine (ADMA) and symmetric NG,N'G-dimethyl-L-arginine (SDMA). ADMA is a potent inhibitor of nitric-oxide (NO) synthase, and this activity provides mechanism through which the kidney regulates blood pressure. This is Alanine--glyoxylate aminotransferase 2, mitochondrial (AGXT2) from Homo sapiens (Human).